A 112-amino-acid polypeptide reads, in one-letter code: MLPKNCTHLGECNSDCLTRSEIQALFREVINTLKHTMNTENVCAHMLDIVSFERIKEYIRANLGHYTVITDKCSKRKVCLHHKRIARLLGIKKIYHQEYKRVVSKVYKKQTW.

It belongs to the baculoviridae LEF-11 family.

Functionally, involved in late/very late gene activation. The chain is Late expression factor 11 (LEF-11) from Helicoverpa zea (Corn earworm moth).